The following is a 593-amino-acid chain: NADH-quinone oxidoreductase subunit C/D (593 aa).

Residues 1 to 184 (MTADNAIFIP…DPYSLTLAKQ (184 aa)) form an NADH dehydrogenase I subunit C region. The NADH dehydrogenase I subunit D stretch occupies residues 208-593 (DYMFLNLGPN…IDFVMADVDR (386 aa)).

This sequence in the N-terminal section; belongs to the complex I 30 kDa subunit family. The protein in the C-terminal section; belongs to the complex I 49 kDa subunit family. In terms of assembly, NDH-1 is composed of 13 different subunits. Subunits NuoB, CD, E, F, and G constitute the peripheral sector of the complex.

Its subcellular location is the cell inner membrane. The enzyme catalyses a quinone + NADH + 5 H(+)(in) = a quinol + NAD(+) + 4 H(+)(out). NDH-1 shuttles electrons from NADH, via FMN and iron-sulfur (Fe-S) centers, to quinones in the respiratory chain. The immediate electron acceptor for the enzyme in this species is believed to be ubiquinone. Couples the redox reaction to proton translocation (for every two electrons transferred, four hydrogen ions are translocated across the cytoplasmic membrane), and thus conserves the redox energy in a proton gradient. The sequence is that of NADH-quinone oxidoreductase subunit C/D from Pseudomonas putida (strain W619).